The primary structure comprises 434 residues: MSILKIHAREIFDSRGNPTVEVDLYTNKGLFRAAVPSGASTGIYEALELRDNDKTRYLGKGVSKAVEHVNKTIAPALISKNVNVVEQEKIDKLMLEMDGTENKSKFGANAILGVSLAVCKAGAAEKGVPLYRHIADLAGNPEVILPVPAFNVINGGSHAGNKLAMQEFMILPVGADTFKEAMRIGAEVYHNLKNVIKEKYGKDATNVGDEGGFAPNILENKEALELLKTAIGKAGYSDKVVIGMDVAASEFYRDGKYDLDFKSPDDPSRYISPDQLADLYLGFVKNYPVVSIEDPFDQDDWAAWKKFTASVGIQVVGDDLTVTNPKRIAKAVEEKSCNCLLLKVNQIGSVTESLQACKLAQSNGWGVMVSHRSGETEDTFIADLVVGLCTGQIKTGAPCRSERLAKYNQLLRIEEELGSKARFAGRNFRNPRIN.

Mg(2+) is bound at residue serine 40. Residues histidine 158 and glutamate 167 each coordinate substrate. Glutamate 210 functions as the Proton donor in the catalytic mechanism. Residues aspartate 245, glutamate 293, and aspartate 318 each coordinate Mg(2+). Glutamate 293 and aspartate 318 together coordinate substrate. Lysine 343 functions as the Proton acceptor in the catalytic mechanism. Residues 370–373 and lysine 394 each bind substrate; that span reads SHRS.

This sequence belongs to the enolase family. In terms of assembly, homodimer. The cofactor is Mg(2+).

It is found in the cytoplasm. The enzyme catalyses (2R)-2-phosphoglycerate = phosphoenolpyruvate + H2O. It participates in carbohydrate degradation; glycolysis; pyruvate from D-glyceraldehyde 3-phosphate: step 4/5. The polypeptide is Alpha-enolase (ENO1) (Gallus gallus (Chicken)).